The chain runs to 380 residues: Cytochrome b (380 aa).

Transmembrane regions (helical) follow at residues 34 to 54, 78 to 99, 114 to 134, and 179 to 199; these read FGSLLGICLMTQILTGLLLAM, WLIRNLHANGASFFFICIYLHI, WNTGIILLLTLMATAFVGYVL, and FFALHFLLPFAIAGLTLIHLT. Heme b-binding residues include His-84 and His-98. His-183 and His-197 together coordinate heme b. His-202 is an a ubiquinone binding site. Transmembrane regions (helical) follow at residues 227-247, 289-309, 321-341, and 348-368; these read LKDILGFTLMVLPLTSLALFS, LGGVLALAASVLVLFLSPFLH, LSQLLFWILVTNLFILTWVGS, and FIIIGQLASITYFTILLILFP.

The protein belongs to the cytochrome b family. The cytochrome bc1 complex contains 11 subunits: 3 respiratory subunits (MT-CYB, CYC1 and UQCRFS1), 2 core proteins (UQCRC1 and UQCRC2) and 6 low-molecular weight proteins (UQCRH/QCR6, UQCRB/QCR7, UQCRQ/QCR8, UQCR10/QCR9, UQCR11/QCR10 and a cleavage product of UQCRFS1). This cytochrome bc1 complex then forms a dimer. Heme b is required as a cofactor.

The protein localises to the mitochondrion inner membrane. Functionally, component of the ubiquinol-cytochrome c reductase complex (complex III or cytochrome b-c1 complex) that is part of the mitochondrial respiratory chain. The b-c1 complex mediates electron transfer from ubiquinol to cytochrome c. Contributes to the generation of a proton gradient across the mitochondrial membrane that is then used for ATP synthesis. This chain is Cytochrome b (MT-CYB), found in Macronectes halli (Hall's giant petrel).